The chain runs to 406 residues: chitinase-like effector (406 aa).

An N-terminal signal peptide occupies residues 1-23 (MLTLLPSLILLLSTLSLSTPANA). One can recognise a GH18 domain in the interval 26-405 (AIAKAYYPGW…DAVRHGAGFK (380 aa)). Chitin is bound by residues Tyr-138 and Trp-384.

It belongs to the glycosyl hydrolase 18 family.

The protein localises to the secreted. Functionally, catalytically impaired chitinase that binds efficiently to chitin, but not to chitosan, xylan, or cellulose. Despite the lack of chitinolytic activity, retains substrate binding specificity and acts as an effector to prevent chitin-triggered immunity by sequestering immunogenic chitin fragments. This Moniliophthora roreri (Frosty pod rot fungus) protein is chitinase-like effector (Chi).